Reading from the N-terminus, the 955-residue chain is E3 ubiquitin-protein ligase MIB2 (955 aa).

Position 1 is an N-acetylmethionine (Met-1). Positions 1 to 80 constitute an MIB/HERC2 1 domain; the sequence is MDPDPQAGVQ…AHDLLLYDNA (80 aa). Residues 86–138 form a ZZ-type zinc finger; it reads HPNIICDCCKKHGLRGMRWKCRVCLDYDLCTQCYMHNKHELAHAFDRYETAHS. Residues Cys-91, Cys-94, Cys-106, Cys-109, Cys-115, Cys-118, His-124, and His-128 each contribute to the Zn(2+) site. The region spanning 149–227 is the MIB/HERC2 2 domain; that stretch reads LPRIPLRGIF…KVDLKCVGEA (79 aa). At Ser-251 the chain carries Phosphoserine. 9 ANK repeats span residues 464-493, 497-526, 530-559, 563-595, 599-628, 633-663, 667-696, 700-728, and 769-798; these read QGRTALQVAAYLGQVELIRLLLQARAGVDL, EGNTALHYAALGNQPEATRVLLSAGCRADA, TQSTALHVAVQRGFLEVVRALCERGCDVNL, HSDTPLHSAISAGTGASGIVEVLTEVPNIDVTA, QGFTLLHHASLKGHALAVRKILARARQLVD, DGFTALHLAALNNHREVAQILIREGRCDVNV, KLQSPLHLAVQQAHVGLVPLLVDAGCSVNA, EGDTALHVALQRHQLLPLVADGAGGDPGP, and RGRSPLDLAAEGRVLKALQGCAQRFRERQA. RING-type zinc fingers lie at residues 832-867 and 911-944; these read CLVCSELALLVLFSPCQHRTVCEECARRMKKCIRCQ and CPICIDSHIRLVFQCGHGACAPCGSALSACPICR.

As to quaternary structure, interacts with actin monomer. In terms of processing, ubiquitinated. Possibly via autoubiquitination. Expressed in skeletal muscle, and to a lesser extent in heart, brain and kidney.

It localises to the cytoplasm. It is found in the endosome. The catalysed reaction is S-ubiquitinyl-[E2 ubiquitin-conjugating enzyme]-L-cysteine + [acceptor protein]-L-lysine = [E2 ubiquitin-conjugating enzyme]-L-cysteine + N(6)-ubiquitinyl-[acceptor protein]-L-lysine.. It functions in the pathway protein modification; protein ubiquitination. E3 ubiquitin-protein ligase that mediates ubiquitination of Delta receptors, which act as ligands of Notch proteins. Positively regulates the Delta-mediated Notch signaling by ubiquitinating the intracellular domain of Delta, leading to endocytosis of Delta receptors. The sequence is that of E3 ubiquitin-protein ligase MIB2 from Homo sapiens (Human).